The chain runs to 198 residues: Photosystem I assembly protein Ycf4 (198 aa).

A disordered region spans residues 1 to 20 (MTASTTINKGDSPNGDSSAS). A run of 2 helical transmembrane segments spans residues 36–58 (YWWA…SSYL) and 78–100 (LVMG…VILW).

It belongs to the Ycf4 family.

Its subcellular location is the cellular thylakoid membrane. In terms of biological role, seems to be required for the assembly of the photosystem I complex. The chain is Photosystem I assembly protein Ycf4 from Nostoc sp. (strain PCC 7120 / SAG 25.82 / UTEX 2576).